The sequence spans 418 residues: AP-3 complex subunit mu-2 (418 aa).

An MHD domain is found at asparagine 176 to arginine 417.

This sequence belongs to the adaptor complexes medium subunit family. Adaptor protein complex 3 (AP-3) is a heterotetramer composed of two large adaptins (delta-type subunit AP3D1 and beta-type subunit AP3B1 or AP3B2), a medium adaptin (mu-type subunit AP3M1 or AP3M2) and a small adaptin (sigma-type subunit APS1 or AP3S2). AP-3 associates with the BLOC-1 complex.

It localises to the golgi apparatus. It is found in the cytoplasmic vesicle membrane. Component of the adaptor complexes which link clathrin to receptors in coated vesicles. Clathrin-associated protein complexes are believed to interact with the cytoplasmic tails of membrane proteins, leading to their selection and concentration. Ap47 is a subunit of the plasma membrane adaptor. In concert with the BLOC-1 complex, AP-3 is required to target cargos into vesicles assembled at cell bodies for delivery into neurites and nerve terminals. This is AP-3 complex subunit mu-2 (Ap3m2) from Mus musculus (Mouse).